Reading from the N-terminus, the 453-residue chain is Transmembrane protein 135 (453 aa).

5 helical membrane-spanning segments follow: residues 68-88 (LLQSTSFLTANGSLYIAFFCI), 96-116 (FYFWTPGFGAALPASYAAILI), 149-169 (PIRHGEVLLFCITSALYMFFF), 293-313 (FQLGAFLGSFVSIYKGTSCFL), and 326-346 (LVAGFLAGISMMFYKSTTISM).

Belongs to the TMEM135 family.

The protein resides in the mitochondrion membrane. Its subcellular location is the peroxisome membrane. Its function is as follows. Involved in mitochondrial metabolism by regulating the balance between mitochondrial fusion and fission. May act as a regulator of mitochondrial fission that promotes DNM1L-dependent fission through activation of DNM1L. May be involved in peroxisome organization. This Xenopus laevis (African clawed frog) protein is Transmembrane protein 135 (tmem135).